A 278-amino-acid chain; its full sequence is Large ribosomal subunit protein uL2 (278 aa).

2 disordered regions span residues 33 to 53 (LTEGKRKTGGRNNKGHVTSRG) and 219 to 278 (LTRG…KKKR). The segment covering 269 to 278 (IRSRHAKKKR) has biased composition (basic residues).

The protein belongs to the universal ribosomal protein uL2 family. As to quaternary structure, part of the 50S ribosomal subunit. Forms a bridge to the 30S subunit in the 70S ribosome.

One of the primary rRNA binding proteins. Required for association of the 30S and 50S subunits to form the 70S ribosome, for tRNA binding and peptide bond formation. It has been suggested to have peptidyltransferase activity; this is somewhat controversial. Makes several contacts with the 16S rRNA in the 70S ribosome. This Sphingopyxis alaskensis (strain DSM 13593 / LMG 18877 / RB2256) (Sphingomonas alaskensis) protein is Large ribosomal subunit protein uL2.